Reading from the N-terminus, the 193-residue chain is Putative manganese efflux pump MntP (193 aa).

6 consecutive transmembrane segments (helical) span residues 3–23, 39–59, 65–85, 113–133, 138–158, and 173–193; these read LATLTVLGFSLSADAFAAALG, VGAYFGAFEAAAPLIGWALGL, IAAFDHWVAFTLLAGVGGHMV, LALAALATSIDATAVGIGLAV, ILMACALIGAITTVVAAGGVL, and VLGGLALIGIGLKILIEHLSA.

This sequence belongs to the MntP (TC 9.B.29) family.

It is found in the cell inner membrane. Its function is as follows. Probably functions as a manganese efflux pump. In Rhodospirillum rubrum (strain ATCC 11170 / ATH 1.1.1 / DSM 467 / LMG 4362 / NCIMB 8255 / S1), this protein is Putative manganese efflux pump MntP.